The chain runs to 294 residues: NAD kinase (294 aa).

Aspartate 74 functions as the Proton acceptor in the catalytic mechanism. Residues 74–75, arginine 79, 149–150, aspartate 179, 190–195, and alanine 214 contribute to the NAD(+) site; these read DG, NE, and TGYSMS.

This sequence belongs to the NAD kinase family. It depends on a divalent metal cation as a cofactor.

The protein resides in the cytoplasm. It catalyses the reaction NAD(+) + ATP = ADP + NADP(+) + H(+). Involved in the regulation of the intracellular balance of NAD and NADP, and is a key enzyme in the biosynthesis of NADP. Catalyzes specifically the phosphorylation on 2'-hydroxyl of the adenosine moiety of NAD to yield NADP. In Flavobacterium psychrophilum (strain ATCC 49511 / DSM 21280 / CIP 103535 / JIP02/86), this protein is NAD kinase.